Reading from the N-terminus, the 616-residue chain is Protein translocase subunit SecD (616 aa).

6 helical membrane passes run 11-31 (LMVI…IYGE), 453-473 (QGIN…LFYY), 475-495 (MFGV…VGLM), 497-517 (ILPG…TLGM), 547-569 (YNGA…IILY), and 585-605 (LGVA…VNAL).

This sequence belongs to the SecD/SecF family. SecD subfamily. As to quaternary structure, forms a complex with SecF. Part of the essential Sec protein translocation apparatus which comprises SecA, SecYEG and auxiliary proteins SecDF-YajC and YidC.

The protein resides in the cell inner membrane. Its function is as follows. Part of the Sec protein translocase complex. Interacts with the SecYEG preprotein conducting channel. SecDF uses the proton motive force (PMF) to complete protein translocation after the ATP-dependent function of SecA. The protein is Protein translocase subunit SecD of Haemophilus influenzae (strain ATCC 51907 / DSM 11121 / KW20 / Rd).